The sequence spans 97 residues: Ig heavy chain V region 914 (97 aa).

An Ig-like domain is found at 1 to 97 (EVKLVESGGG…EDTAMYYCAR (97 aa)).

In Mus musculus (Mouse), this protein is Ig heavy chain V region 914.